A 780-amino-acid polypeptide reads, in one-letter code: ATP-dependent 6-phosphofructokinase, muscle type (780 aa).

Residue Thr-2 is modified to N-acetylthreonine. The tract at residues 2-390 (THEEHHAAKT…NWEVYKLLAH (389 aa)) is N-terminal catalytic PFK domain 1. ATP-binding positions include Gly-25, 88–89 (RC), and 118–121 (GDGS). Asp-119 is a Mg(2+) binding site. Ser-133 carries the post-translational modification Phosphoserine. Residues 164-166 (SID), Arg-201, 208-210 (MGR), Glu-264, Arg-292, and 298-301 (HVQR) contribute to the substrate site. Catalysis depends on Asp-166, which acts as the Proton acceptor. Position 377 is a phosphoserine (Ser-377). Residues 391-401 (VRPPVSKSGSH) are interdomain linker. The segment at 402–780 (TVAVMNVGAP…TRKRSGEAAV (379 aa)) is C-terminal regulatory PFK domain 2. Beta-D-fructose 2,6-bisphosphate-binding positions include Arg-471 and 528–532 (TVSNN). Residue Ser-530 is glycosylated (O-linked (GlcNAc) serine). Lys-557 is subject to N6-(2-hydroxyisobutyryl)lysine. Beta-D-fructose 2,6-bisphosphate contacts are provided by residues Arg-566, 573–575 (MGG), Glu-629, Arg-655, and 661–664 (HMQQ). Residue Ser-667 is modified to Phosphoserine. Beta-D-fructose 2,6-bisphosphate is bound at residue Arg-735. Ser-775 carries the phosphoserine modification.

Belongs to the phosphofructokinase type A (PFKA) family. ATP-dependent PFK group I subfamily. Eukaryotic two domain clade 'E' sub-subfamily. Homo- and heterotetramers. Phosphofructokinase (PFK) enzyme functions as a tetramer composed of different combinations of 3 types of subunits, called PFKM (where M stands for Muscle), PFKL (Liver) and PFKP (Platelet). The composition of the PFK tetramer differs according to the tissue type it is present in. In muscles, it is composed of 4 PFKM subunits (also called M4). In the liver, the predominant form is a tetramer of PFKL subunits (L4). In erythrocytes, both PFKM and PFKL subunits randomly tetramerize to form M4, L4 and other combinations (ML3, M2L2, M3L). The kinetic and regulatory properties of the tetrameric enzyme are dependent on the subunit composition, hence can vary across tissues. Interacts (via C-terminus) with HK1 (via N-terminal spermatogenic cell-specific region). Requires Mg(2+) as cofactor. Post-translationally, glcNAcylation decreases enzyme activity.

Its subcellular location is the cytoplasm. It carries out the reaction beta-D-fructose 6-phosphate + ATP = beta-D-fructose 1,6-bisphosphate + ADP + H(+). Its pathway is carbohydrate degradation; glycolysis; D-glyceraldehyde 3-phosphate and glycerone phosphate from D-glucose: step 3/4. Its activity is regulated as follows. Allosterically activated by ADP, AMP, or fructose 2,6-bisphosphate, and allosterically inhibited by ATP or citrate. Its function is as follows. Catalyzes the phosphorylation of D-fructose 6-phosphate to fructose 1,6-bisphosphate by ATP, the first committing step of glycolysis. This chain is ATP-dependent 6-phosphofructokinase, muscle type (PFKM), found in Homo sapiens (Human).